A 556-amino-acid chain; its full sequence is Urocanate hydratase (556 aa).

NAD(+)-binding positions include 52–53 (GG), glutamine 130, 176–178 (GMG), glutamate 196, arginine 201, 242–243 (NA), 263–267 (QTSAH), 273–274 (YL), and tyrosine 322. Cysteine 410 is a catalytic residue. Residue glycine 492 participates in NAD(+) binding.

Belongs to the urocanase family. Requires NAD(+) as cofactor.

The protein localises to the cytoplasm. The enzyme catalyses 4-imidazolone-5-propanoate = trans-urocanate + H2O. The protein operates within amino-acid degradation; L-histidine degradation into L-glutamate; N-formimidoyl-L-glutamate from L-histidine: step 2/3. Catalyzes the conversion of urocanate to 4-imidazolone-5-propionate. This chain is Urocanate hydratase, found in Shewanella sp. (strain ANA-3).